A 292-amino-acid chain; its full sequence is 4-diphosphocytidyl-2-C-methyl-D-erythritol kinase (292 aa).

The active site involves Lys-20. Position 103–113 (103–113) interacts with ATP; that stretch reads PMGGGIGGGSS. Asp-145 is an active-site residue.

Belongs to the GHMP kinase family. IspE subfamily.

It carries out the reaction 4-CDP-2-C-methyl-D-erythritol + ATP = 4-CDP-2-C-methyl-D-erythritol 2-phosphate + ADP + H(+). It participates in isoprenoid biosynthesis; isopentenyl diphosphate biosynthesis via DXP pathway; isopentenyl diphosphate from 1-deoxy-D-xylulose 5-phosphate: step 3/6. Catalyzes the phosphorylation of the position 2 hydroxy group of 4-diphosphocytidyl-2C-methyl-D-erythritol. In Cupriavidus necator (strain ATCC 17699 / DSM 428 / KCTC 22496 / NCIMB 10442 / H16 / Stanier 337) (Ralstonia eutropha), this protein is 4-diphosphocytidyl-2-C-methyl-D-erythritol kinase.